Consider the following 116-residue polypeptide: uncharacterized protein (116 aa).

The tract at residues 76 to 116 (VPPPRYSYIRSESSRNNLRNSARNQPQNLVSEQDSDSNREN) is disordered. A compositionally biased stretch (low complexity) spans 85–99 (RSESSRNNLRNSARN).

This is an uncharacterized protein from Glycine max (Soybean).